Reading from the N-terminus, the 494-residue chain is MASRILVNIKEEVTCPICLELLTEPLSLDCGHSFCQACITANHKESTPHQGERSCPLCRMSYPSENLRPNRHLANIVERLKEVMLSPEKGQKVGHCARHGEKLLLFCEQDGNVICWLCERSQEHRGHHTFLVEEVAEKYQEKLQVALEMMRQKQQDAEKLEADVREEQASWKIQIRNDKTNIMAEFKQLRDILDCEESKELQNLEKEEKNILKRLVQSESDMALQTQSMRVLISDLERRLQGSVLELLQGVDDVIKRIETVTLQKPKTFLNEKRRVFRAPDLKGMLQAFKELTEVQRYWAHVTLVPSHPSYTVISEDERQVRYQFPIHQPSVKVNYFYGVLGSPSITSGKHYWEVDVSNKRAWILGVCVSLKYNAKWNVLRPENYQPKNGYWVIGLQNTNNYSAFQDAVKYSDFQIGSRSTASVPLIVPLFMTICPNRVGVFLDYEACTVSFFNVTNNGFLIYKFSNCHFSYPVFPYFSPVTCELPMTLCSPSS.

At Ala-2 the chain carries N-acetylalanine. The RING-type zinc finger occupies 15–59 (CPICLELLTEPLSLDCGHSFCQACITANHKESTPHQGERSCPLCR). Position 86 is a phosphoserine (Ser-86). The segment at 91 to 132 (QKVGHCARHGEKLLLFCEQDGNVICWLCERSQEHRGHHTFLV) adopts a B box-type zinc-finger fold. Positions 96, 99, 118, and 124 each coordinate Zn(2+). Residues 131-223 (LVEEVAEKYQ…RLVQSESDMA (93 aa)) are a coiled coil. Residues 186–199 (FKQLRDILDCEESK) form a required for interaction with GABARAP and for autophagy region. The region spanning 280–494 (PDLKGMLQAF…LPMTLCSPSS (215 aa)) is the B30.2/SPRY domain.

It belongs to the TRIM/RBCC family. Can form homodimers and homotrimers. In addition to lower-order dimerization, also exhibits a higher-order multimerization and both low- and high-order multimerizations are essential for its restriction activity. Interacts with BTBD1 and BTBD2. Interacts with PSMC4, PSMC5, PSMD7 and HSPA8/HSC70. Interacts (via B30.2/SPRY domain) with HSPA1A/B. Interacts with PSMC2, MAP3K7/TAK1, TAB2 and TAB3. Interacts with SQSTM1. Interacts with TRIM6 and TRIM34. Interacts with ULK1 (phosphorylated form), GABARAP, GABARAPL1, GABARAPL2, MAP1LC3A, MAP1LC3C and BECN1. Post-translationally, degraded in a proteasome-independent fashion in the absence of viral infection but in a proteasome-dependent fashion following exposure to restriction sensitive virus. Autoubiquitinated in a RING finger- and UBE2D2-dependent manner. Monoubiquitinated by TRIM21. Deubiquitinated by Yersinia YopJ. Ubiquitination may not lead to proteasomal degradation.

Its subcellular location is the cytoplasm. The protein resides in the nucleus. The enzyme catalyses S-ubiquitinyl-[E2 ubiquitin-conjugating enzyme]-L-cysteine + [acceptor protein]-L-lysine = [E2 ubiquitin-conjugating enzyme]-L-cysteine + N(6)-ubiquitinyl-[acceptor protein]-L-lysine.. The protein operates within protein modification; protein ubiquitination. Functionally, capsid-specific restriction factor that prevents infection from non-host-adapted retroviruses. Blocks viral replication early in the life cycle, after viral entry but before reverse transcription. In addition to acting as a capsid-specific restriction factor, also acts as a pattern recognition receptor that activates innate immune signaling in response to the retroviral capsid lattice. Binding to the viral capsid triggers its E3 ubiquitin ligase activity, and in concert with the heterodimeric ubiquitin conjugating enzyme complex UBE2V1-UBE2N (also known as UBC13-UEV1A complex) generates 'Lys-63'-linked polyubiquitin chains, which in turn are catalysts in the autophosphorylation of the MAP3K7/TAK1 complex (includes TAK1, TAB2, and TAB3). Activation of the MAP3K7/TAK1 complex by autophosphorylation results in the induction and expression of NF-kappa-B and MAPK-responsive inflammatory genes, thereby leading to an innate immune response in the infected cell. Plays a role in regulating autophagy through activation of autophagy regulator BECN1 by causing its dissociation from its inhibitors BCL2 and TAB2. The polypeptide is Tripartite motif-containing protein 5 (TRIM5) (Saguinus oedipus (Cotton-top tamarin)).